A 617-amino-acid polypeptide reads, in one-letter code: Probable Xaa-Pro aminopeptidase P (617 aa).

Residues Asp414, Asp425, Glu523, and Glu537 each coordinate Mn(2+).

It belongs to the peptidase M24B family. The cofactor is Mn(2+).

The catalysed reaction is Release of any N-terminal amino acid, including proline, that is linked to proline, even from a dipeptide or tripeptide.. Catalyzes the removal of a penultimate prolyl residue from the N-termini of peptides. This chain is Probable Xaa-Pro aminopeptidase P (AMPP), found in Ajellomyces capsulatus (strain NAm1 / WU24) (Darling's disease fungus).